Here is a 132-residue protein sequence, read N- to C-terminus: Small ribosomal subunit protein uS11 (132 aa).

The tract at residues 108 to 132 (GRIEDVTPVPHDSCRPKGGRRGRRV) is disordered.

The protein belongs to the universal ribosomal protein uS11 family. Part of the 30S ribosomal subunit.

Located on the platform of the 30S subunit. The sequence is that of Small ribosomal subunit protein uS11 from Methanoregula boonei (strain DSM 21154 / JCM 14090 / 6A8).